The following is a 139-amino-acid chain: NADPH-dependent 7-cyano-7-deazaguanine reductase (139 aa).

C34 serves as the catalytic Thioimide intermediate. D41 acts as the Proton donor in catalysis. Substrate-binding positions include 56–58 and 75–76; these read VEL and HE.

This sequence belongs to the GTP cyclohydrolase I family. QueF type 1 subfamily.

The protein resides in the cytoplasm. It carries out the reaction 7-aminomethyl-7-carbaguanine + 2 NADP(+) = 7-cyano-7-deazaguanine + 2 NADPH + 3 H(+). It participates in tRNA modification; tRNA-queuosine biosynthesis. In terms of biological role, catalyzes the NADPH-dependent reduction of 7-cyano-7-deazaguanine (preQ0) to 7-aminomethyl-7-deazaguanine (preQ1). This chain is NADPH-dependent 7-cyano-7-deazaguanine reductase, found in Thiobacillus denitrificans (strain ATCC 25259 / T1).